The following is a 43-amino-acid chain: Protein PsbN (43 aa).

The helical transmembrane segment at Phe-7 to Phe-27 threads the bilayer.

This sequence belongs to the PsbN family.

Its subcellular location is the cell inner membrane. Functionally, may play a role in photosystem I and II biogenesis. In Gloeobacter violaceus (strain ATCC 29082 / PCC 7421), this protein is Protein PsbN.